We begin with the raw amino-acid sequence, 233 residues long: Probable chemoreceptor glutamine deamidase CheD (233 aa).

Belongs to the CheD family.

The enzyme catalyses L-glutaminyl-[protein] + H2O = L-glutamyl-[protein] + NH4(+). Functionally, probably deamidates glutamine residues to glutamate on methyl-accepting chemotaxis receptors (MCPs), playing an important role in chemotaxis. This is Probable chemoreceptor glutamine deamidase CheD from Ralstonia nicotianae (strain ATCC BAA-1114 / GMI1000) (Ralstonia solanacearum).